We begin with the raw amino-acid sequence, 682 residues long: DNA-directed RNA polymerase subunit beta' (682 aa).

The Zn(2+) site is built by Cys-69, Cys-71, Cys-87, and Cys-90. Mg(2+) contacts are provided by Asp-489, Asp-491, and Asp-493.

The protein belongs to the RNA polymerase beta' chain family. RpoC1 subfamily. In plastids the minimal PEP RNA polymerase catalytic core is composed of four subunits: alpha, beta, beta', and beta''. When a (nuclear-encoded) sigma factor is associated with the core the holoenzyme is formed, which can initiate transcription. Requires Mg(2+) as cofactor. It depends on Zn(2+) as a cofactor.

It localises to the plastid. It is found in the chloroplast. The enzyme catalyses RNA(n) + a ribonucleoside 5'-triphosphate = RNA(n+1) + diphosphate. DNA-dependent RNA polymerase catalyzes the transcription of DNA into RNA using the four ribonucleoside triphosphates as substrates. This chain is DNA-directed RNA polymerase subunit beta', found in Acorus calamus var. americanus (American sweet flag).